Here is a 91-residue protein sequence, read N- to C-terminus: Small ribosomal subunit protein bS18 (91 aa).

Belongs to the bacterial ribosomal protein bS18 family. As to quaternary structure, part of the 30S ribosomal subunit. Forms a tight heterodimer with protein bS6.

Its function is as follows. Binds as a heterodimer with protein bS6 to the central domain of the 16S rRNA, where it helps stabilize the platform of the 30S subunit. This chain is Small ribosomal subunit protein bS18, found in Paraburkholderia phytofirmans (strain DSM 17436 / LMG 22146 / PsJN) (Burkholderia phytofirmans).